Reading from the N-terminus, the 244-residue chain is MESTRTEAIVLAAMDYRESDRIVTLFTLQYGKVRGVAKGAKRSARRFGPALEPFARIGVELVVREGLSSLRGADIVTLYPGIRRDLRAIGLAGYAVELVDRYLPDGAPSPRLFRLLSSYLERLDQGEPLPSDRRFFEANFLNILGYRISLDHCASCGVELPATAERRTGASGMILCANCGRYGASVGPEAAALLGRCIATGRFGAVLFSPQSLREAGTLLDGAIAAHLTRPLNSLAFLKQIEPD.

Belongs to the RecO family.

Involved in DNA repair and RecF pathway recombination. The chain is DNA repair protein RecO from Geobacter metallireducens (strain ATCC 53774 / DSM 7210 / GS-15).